Consider the following 232-residue polypeptide: Ion-translocating oxidoreductase complex subunit E (232 aa).

6 helical membrane passes run 18–38, 39–59, 69–89, 93–113, 127–147, and 182–202; these read GLVQ…LTNA, IGLG…VSLV, IPVF…LINA, GLYL…VIIG, AAFD…LLGA, and NFLL…LIAI.

Belongs to the NqrDE/RnfAE family. The complex is composed of six subunits: RnfA, RnfB, RnfC, RnfD, RnfE and RnfG.

It localises to the cell inner membrane. Functionally, part of a membrane-bound complex that couples electron transfer with translocation of ions across the membrane. The chain is Ion-translocating oxidoreductase complex subunit E from Shewanella loihica (strain ATCC BAA-1088 / PV-4).